The primary structure comprises 292 residues: 4-diphosphocytidyl-2-C-methyl-D-erythritol kinase (292 aa).

The active site involves lysine 20. 103–113 provides a ligand contact to ATP; the sequence is PMGGGIGGGSS. Residue aspartate 145 is part of the active site.

This sequence belongs to the GHMP kinase family. IspE subfamily.

It carries out the reaction 4-CDP-2-C-methyl-D-erythritol + ATP = 4-CDP-2-C-methyl-D-erythritol 2-phosphate + ADP + H(+). Its pathway is isoprenoid biosynthesis; isopentenyl diphosphate biosynthesis via DXP pathway; isopentenyl diphosphate from 1-deoxy-D-xylulose 5-phosphate: step 3/6. Its function is as follows. Catalyzes the phosphorylation of the position 2 hydroxy group of 4-diphosphocytidyl-2C-methyl-D-erythritol. The chain is 4-diphosphocytidyl-2-C-methyl-D-erythritol kinase from Cupriavidus metallidurans (strain ATCC 43123 / DSM 2839 / NBRC 102507 / CH34) (Ralstonia metallidurans).